Reading from the N-terminus, the 100-residue chain is Large ribosomal subunit protein uL23 (100 aa).

Belongs to the universal ribosomal protein uL23 family. Part of the 50S ribosomal subunit. Contacts protein L29, and trigger factor when it is bound to the ribosome.

Its function is as follows. One of the early assembly proteins it binds 23S rRNA. One of the proteins that surrounds the polypeptide exit tunnel on the outside of the ribosome. Forms the main docking site for trigger factor binding to the ribosome. The polypeptide is Large ribosomal subunit protein uL23 (Shewanella frigidimarina (strain NCIMB 400)).